The sequence spans 340 residues: Coproporphyrin III ferrochelatase (340 aa).

The Fe-coproporphyrin III site is built by S52 and Y121. H181 and E264 together coordinate Fe(2+).

This sequence belongs to the ferrochelatase family.

It is found in the cytoplasm. The catalysed reaction is Fe-coproporphyrin III + 2 H(+) = coproporphyrin III + Fe(2+). It participates in porphyrin-containing compound metabolism; protoheme biosynthesis. Its function is as follows. Involved in coproporphyrin-dependent heme b biosynthesis. Catalyzes the insertion of ferrous iron into coproporphyrin III to form Fe-coproporphyrin III. In Mycolicibacterium smegmatis (strain ATCC 700084 / mc(2)155) (Mycobacterium smegmatis), this protein is Coproporphyrin III ferrochelatase.